Consider the following 661-residue polypeptide: UvrABC system protein C (661 aa).

One can recognise a GIY-YIG domain in the interval 25–104; that stretch reads AEPGCYLMRD…IKNHQPHFNV (80 aa). A UVR domain is found at 214–249; sequence DELQHLLQEQMERYAERMDYESAARVRDQLQGLDQL. Residues 636 to 652 show a composition bias toward basic and acidic residues; it reads FFHPSDEGTDADARAAL. The tract at residues 636–661 is disordered; it reads FFHPSDEGTDADARAALEEQPQELSA.

Belongs to the UvrC family. Interacts with UvrB in an incision complex.

Its subcellular location is the cytoplasm. Functionally, the UvrABC repair system catalyzes the recognition and processing of DNA lesions. UvrC both incises the 5' and 3' sides of the lesion. The N-terminal half is responsible for the 3' incision and the C-terminal half is responsible for the 5' incision. The sequence is that of UvrABC system protein C from Synechococcus sp. (strain CC9605).